A 131-amino-acid polypeptide reads, in one-letter code: Small ribosomal subunit protein uS8 (131 aa).

This sequence belongs to the universal ribosomal protein uS8 family. Part of the 30S ribosomal subunit. Contacts proteins S5 and S12.

One of the primary rRNA binding proteins, it binds directly to 16S rRNA central domain where it helps coordinate assembly of the platform of the 30S subunit. The chain is Small ribosomal subunit protein uS8 from Chlorobium phaeobacteroides (strain DSM 266 / SMG 266 / 2430).